We begin with the raw amino-acid sequence, 356 residues long: Tyrosine recombinase XerS (356 aa).

A Core-binding (CB) domain is found at 16–121 (LMPWYVLEYY…ALSSLYKYLT (106 aa)). The Tyr recombinase domain occupies 169 to 354 (GFLTYIDQEH…VNDEQKNALD (186 aa)). Active-site residues include Arg210, Lys234, His306, Arg309, and His332. The active-site O-(3'-phospho-DNA)-tyrosine intermediate is the Tyr341.

The protein belongs to the 'phage' integrase family. XerS subfamily.

The protein localises to the cytoplasm. Its activity is regulated as follows. FtsK is required for recombination. Functionally, site-specific tyrosine recombinase, which acts by catalyzing the cutting and rejoining of the recombining DNA molecules. Essential to convert dimers of the bacterial chromosome into monomers to permit their segregation at cell division. The polypeptide is Tyrosine recombinase XerS (Streptococcus pneumoniae serotype 19F (strain G54)).